The chain runs to 300 residues: 4-hydroxy-tetrahydrodipicolinate synthase (300 aa).

Thr45 contacts pyruvate. Tyr140 (proton donor/acceptor) is an active-site residue. Catalysis depends on Lys169, which acts as the Schiff-base intermediate with substrate. Ile210 lines the pyruvate pocket.

It belongs to the DapA family. Homotetramer; dimer of dimers.

Its subcellular location is the cytoplasm. It carries out the reaction L-aspartate 4-semialdehyde + pyruvate = (2S,4S)-4-hydroxy-2,3,4,5-tetrahydrodipicolinate + H2O + H(+). Its pathway is amino-acid biosynthesis; L-lysine biosynthesis via DAP pathway; (S)-tetrahydrodipicolinate from L-aspartate: step 3/4. In terms of biological role, catalyzes the condensation of (S)-aspartate-beta-semialdehyde [(S)-ASA] and pyruvate to 4-hydroxy-tetrahydrodipicolinate (HTPA). This is 4-hydroxy-tetrahydrodipicolinate synthase from Helicobacter pylori (strain P12).